We begin with the raw amino-acid sequence, 428 residues long: Gamma-glutamyl phosphate reductase (428 aa).

This sequence belongs to the gamma-glutamyl phosphate reductase family.

The protein localises to the cytoplasm. The catalysed reaction is L-glutamate 5-semialdehyde + phosphate + NADP(+) = L-glutamyl 5-phosphate + NADPH + H(+). Its pathway is amino-acid biosynthesis; L-proline biosynthesis; L-glutamate 5-semialdehyde from L-glutamate: step 2/2. Catalyzes the NADPH-dependent reduction of L-glutamate 5-phosphate into L-glutamate 5-semialdehyde and phosphate. The product spontaneously undergoes cyclization to form 1-pyrroline-5-carboxylate. In Afipia carboxidovorans (strain ATCC 49405 / DSM 1227 / KCTC 32145 / OM5) (Oligotropha carboxidovorans), this protein is Gamma-glutamyl phosphate reductase.